The following is a 65-amino-acid chain: Large ribosomal subunit protein bL32 (65 aa).

A compositionally biased stretch (basic residues) spans 1 to 19 (MAIVPKRKTSKQRKHKRQS). A disordered region spans residues 1 to 21 (MAIVPKRKTSKQRKHKRQSHS).

The protein belongs to the bacterial ribosomal protein bL32 family.

This Mesomycoplasma hyopneumoniae (strain 7448) (Mycoplasma hyopneumoniae) protein is Large ribosomal subunit protein bL32.